A 92-amino-acid chain; its full sequence is MSSAFDWRAKAACRDKDPELFFPVGNTGAAYQQIEEAKAVCRTCKVIDACLKCALDTNQDYGVWGGLSEDERRALKRRAMRARRSQAMQMQI.

Positions alanine 12–alanine 74 constitute a 4Fe-4S Wbl-type domain. [4Fe-4S] cluster is bound by residues cysteine 13, cysteine 41, cysteine 44, and cysteine 50.

Belongs to the WhiB family. Requires [4Fe-4S] cluster as cofactor. The Fe-S cluster can be nitrosylated by nitric oxide (NO). In terms of processing, upon Fe-S cluster removal intramolecular disulfide bonds are formed.

Its subcellular location is the cytoplasm. Acts as a transcriptional regulator. Probably redox-responsive. The apo- but not holo-form probably binds DNA. This is Transcriptional regulator WhiB1 (whiB1) from Bifidobacterium longum (strain NCC 2705).